We begin with the raw amino-acid sequence, 433 residues long: 3-phosphoshikimate 1-carboxyvinyltransferase (433 aa).

3-phosphoshikimate-binding residues include K22, S23, and R27. K22 provides a ligand contact to phosphoenolpyruvate. Residues G95 and R123 each contribute to the phosphoenolpyruvate site. 4 residues coordinate 3-phosphoshikimate: S167, Q169, D315, and K342. Q169 is a phosphoenolpyruvate binding site. The active-site Proton acceptor is the D315. 2 residues coordinate phosphoenolpyruvate: R346 and R387.

It belongs to the EPSP synthase family. Monomer.

The protein resides in the cytoplasm. The enzyme catalyses 3-phosphoshikimate + phosphoenolpyruvate = 5-O-(1-carboxyvinyl)-3-phosphoshikimate + phosphate. The protein operates within metabolic intermediate biosynthesis; chorismate biosynthesis; chorismate from D-erythrose 4-phosphate and phosphoenolpyruvate: step 6/7. In terms of biological role, catalyzes the transfer of the enolpyruvyl moiety of phosphoenolpyruvate (PEP) to the 5-hydroxyl of shikimate-3-phosphate (S3P) to produce enolpyruvyl shikimate-3-phosphate and inorganic phosphate. In Legionella pneumophila (strain Lens), this protein is 3-phosphoshikimate 1-carboxyvinyltransferase.